Here is a 126-residue protein sequence, read N- to C-terminus: Large ribosomal subunit protein bL19 (126 aa).

This sequence belongs to the bacterial ribosomal protein bL19 family.

In terms of biological role, this protein is located at the 30S-50S ribosomal subunit interface and may play a role in the structure and function of the aminoacyl-tRNA binding site. This Paracoccus denitrificans (strain Pd 1222) protein is Large ribosomal subunit protein bL19.